A 460-amino-acid chain; its full sequence is A-type ATP synthase subunit B (460 aa).

It belongs to the ATPase alpha/beta chains family. In terms of assembly, has multiple subunits with at least A(3), B(3), C, D, E, F, H, I and proteolipid K(x).

The protein resides in the cell membrane. Functionally, component of the A-type ATP synthase that produces ATP from ADP in the presence of a proton gradient across the membrane. The B chain is a regulatory subunit. This is A-type ATP synthase subunit B from Methanosarcina acetivorans (strain ATCC 35395 / DSM 2834 / JCM 12185 / C2A).